A 1095-amino-acid polypeptide reads, in one-letter code: DNA-directed RNA polymerase subunit beta (1095 aa).

Positions 1069–1095 (DLMQDVNPRRSTPSRPTYESLGKEYEE) are disordered.

It belongs to the RNA polymerase beta chain family. In terms of assembly, in cyanobacteria the RNAP catalytic core is composed of 2 alpha, 1 beta, 1 beta', 1 gamma and 1 omega subunit. When a sigma factor is associated with the core the holoenzyme is formed, which can initiate transcription.

The catalysed reaction is RNA(n) + a ribonucleoside 5'-triphosphate = RNA(n+1) + diphosphate. Its function is as follows. DNA-dependent RNA polymerase catalyzes the transcription of DNA into RNA using the four ribonucleoside triphosphates as substrates. This is DNA-directed RNA polymerase subunit beta from Prochlorococcus marinus (strain NATL2A).